The primary structure comprises 393 residues: Mitogen-activated protein kinase 10 (393 aa).

The Protein kinase domain maps to 60 to 345; sequence KPPIRPIGRG…VKEALAHPYL (286 aa). ATP is bound by residues 66–74 and Lys-89; that span reads IGRGACGIV. Residue Asp-186 is the Proton acceptor of the active site. Thr-218 bears the Phosphothreonine mark. The TXY signature appears at 218–220; sequence TEY. Tyr-220 is subject to Phosphotyrosine. Thr-223 carries the post-translational modification Phosphothreonine.

Belongs to the protein kinase superfamily. CMGC Ser/Thr protein kinase family. MAP kinase subfamily. As to quaternary structure, interacts with MKK2. In terms of processing, dually phosphorylated on Thr-218 and Tyr-220, which activates the enzyme.

It carries out the reaction L-seryl-[protein] + ATP = O-phospho-L-seryl-[protein] + ADP + H(+). The enzyme catalyses L-threonyl-[protein] + ATP = O-phospho-L-threonyl-[protein] + ADP + H(+). Its activity is regulated as follows. Activated by threonine and tyrosine phosphorylation. The polypeptide is Mitogen-activated protein kinase 10 (MPK10) (Arabidopsis thaliana (Mouse-ear cress)).